The chain runs to 368 residues: Dual-specificity RNA methyltransferase RlmN (368 aa).

The active-site Proton acceptor is the E94. The Radical SAM core domain maps to 100-334; that stretch reads EEDRATLCVS…VIVRKTRGDD (235 aa). An intrachain disulfide couples C107 to C339. The [4Fe-4S] cluster site is built by C114, C118, and C121. S-adenosyl-L-methionine contacts are provided by residues 163-164, S195, 217-219, and N296; these read GE and SLH. The active-site S-methylcysteine intermediate is the C339.

It belongs to the radical SAM superfamily. RlmN family. The cofactor is [4Fe-4S] cluster.

It is found in the cytoplasm. It catalyses the reaction adenosine(2503) in 23S rRNA + 2 reduced [2Fe-2S]-[ferredoxin] + 2 S-adenosyl-L-methionine = 2-methyladenosine(2503) in 23S rRNA + 5'-deoxyadenosine + L-methionine + 2 oxidized [2Fe-2S]-[ferredoxin] + S-adenosyl-L-homocysteine. It carries out the reaction adenosine(37) in tRNA + 2 reduced [2Fe-2S]-[ferredoxin] + 2 S-adenosyl-L-methionine = 2-methyladenosine(37) in tRNA + 5'-deoxyadenosine + L-methionine + 2 oxidized [2Fe-2S]-[ferredoxin] + S-adenosyl-L-homocysteine. Specifically methylates position 2 of adenine 2503 in 23S rRNA and position 2 of adenine 37 in tRNAs. m2A2503 modification seems to play a crucial role in the proofreading step occurring at the peptidyl transferase center and thus would serve to optimize ribosomal fidelity. The chain is Dual-specificity RNA methyltransferase RlmN from Aeromonas salmonicida (strain A449).